A 433-amino-acid polypeptide reads, in one-letter code: Enolase (433 aa).

Gln-163 serves as a coordination point for (2R)-2-phosphoglycerate. Residue Glu-205 is the Proton donor of the active site. The Mg(2+) site is built by Asp-241, Glu-289, and Asp-316. (2R)-2-phosphoglycerate contacts are provided by Lys-341, Arg-370, Ser-371, and Lys-392. Catalysis depends on Lys-341, which acts as the Proton acceptor.

It belongs to the enolase family. The cofactor is Mg(2+).

It is found in the cytoplasm. Its subcellular location is the secreted. The protein resides in the cell surface. The enzyme catalyses (2R)-2-phosphoglycerate = phosphoenolpyruvate + H2O. The protein operates within carbohydrate degradation; glycolysis; pyruvate from D-glyceraldehyde 3-phosphate: step 4/5. Its function is as follows. Catalyzes the reversible conversion of 2-phosphoglycerate (2-PG) into phosphoenolpyruvate (PEP). It is essential for the degradation of carbohydrates via glycolysis. This Treponema denticola (strain ATCC 35405 / DSM 14222 / CIP 103919 / JCM 8153 / KCTC 15104) protein is Enolase.